The primary structure comprises 1260 residues: Phosphatidylinositol 3,4,5-trisphosphate 5-phosphatase 2 (1260 aa).

Positions 25 to 121 (WYHRDLSRAA…GLVCALLLPV (97 aa)) constitute an SH2 domain. Residues 126–136 (ELDPPDERDAS) show a composition bias toward basic and acidic residues. The disordered stretch occupies residues 126–178 (ELDPPDERDASDGEDEKPPLPPRSGTSVSAPLGPSSPPAAPEPPTPAVESAPN). Residue S136 is modified to Phosphoserine. Residues 159–171 (PSSPPAAPEPPTP) are compositionally biased toward pro residues. 2 positions are modified to phosphoserine: S243 and S355. A Phosphotyrosine modification is found at Y888. S892 carries the phosphoserine modification. Positions 899–1120 (GAKSKAPSVS…FLGEAAGGDD (222 aa)) are disordered. Residues 940–952 (PPPTGRPPAPPRA) show a composition bias toward pro residues. Residues 946 to 951 (PPAPPR) carry the SH3-binding motif. Basic and acidic residues predominate over residues 953 to 967 (APREEPLTPRLKPEG). A Phosphothreonine modification is found at T960. The short motif at 985–988 (NPAY) is the NPXY motif element. Position 988 is a phosphotyrosine (Y988). 3 stretches are compositionally biased toward pro residues: residues 998–1013 (LLPPEPPSPARAPVPP), 1050–1061 (LPPPDFPPPPLP), and 1090–1108 (LPPPKAHPRPPLPPGPLPP). The residue at position 1133 (S1133) is a Phosphoserine. The residue at position 1164 (Y1164) is a Phosphotyrosine. The segment at 1181-1200 (EDLAEEAPCPQAGRTGGLGE) is disordered. Residues 1198–1260 (LGEAGMGAWL…LLLDTLQLSK (63 aa)) form the SAM domain. S1259 carries the post-translational modification Phosphoserine.

The protein belongs to the inositol 1,4,5-trisphosphate 5-phosphatase family. In terms of assembly, interacts with tyrosine phosphorylated form of SHC1. Interacts with EGFR. Upon stimulation by the EGF signaling pathway, it forms a complex with SHC1 and EGFR. Interacts with cytoskeletal protein SORBS3/vinexin, promoting its localization to the periphery of cells. Forms a complex with filamin (FLNA or FLNB), actin, GPIb (GP1BA or GP1BB) that regulates cortical and submembraneous actin. Interacts with c-Met/MET, when c-Met/MET is phosphorylated on 'Tyr-1356'. Interacts with p130Cas/BCAR1. Interacts with CENTD3/ARAP3 via its SAM domain. Interacts with c-Cbl/CBL and CAP/SORBS1. Interacts with activated EPHA2 receptor. Interacts with receptor FCGR2A. Interacts with receptor FCGR2B. Interacts with tyrosine kinase ABL1. Interacts with tyrosine kinase TEC. Interacts with CSF1R. Interacts (via N-terminus) with SH3YL1 (via SH3 domain). Interacts with FCRL6 (tyrosine phosphorylated form). Interacts (via SH2 domain) with tyrosine phosphorylated KLRC1 (via ITIM). Interacts with NEDD9/HEF1. In terms of processing, tyrosine phosphorylated by the members of the SRC family after exposure to a diverse array of extracellular stimuli such as insulin, growth factors such as EGF or PDGF, chemokines, integrin ligands and hypertonic and oxidative stress. May be phosphorylated upon IgG receptor FCGR2B-binding. Phosphorylated at Tyr-988 following cell attachment and spreading. Phosphorylated at Tyr-1164 following EGF signaling pathway stimulation. In terms of tissue distribution, expressed abundantly in skeletal muscle tissue.

It localises to the cytoplasm. It is found in the cytosol. The protein localises to the cytoskeleton. Its subcellular location is the membrane. The protein resides in the cell projection. It localises to the filopodium. It is found in the lamellipodium. The protein localises to the basal cell membrane. Its subcellular location is the nucleus. The protein resides in the nucleus speckle. It localises to the spindle pole. It carries out the reaction a 1,2-diacyl-sn-glycero-3-phospho-(1D-myo-inositol-3,4,5-trisphosphate) + H2O = a 1,2-diacyl-sn-glycero-3-phospho-(1D-myo-inositol-3,4-bisphosphate) + phosphate. The enzyme catalyses 1,2-dioctanoyl-sn-glycero-3-phospho-(1D-myo-inositol-3,4,5-trisphosphate) + H2O = 1,2-dioctanoyl-sn-glycero-3-phospho-(1D-myo-inositol-3,4-bisphosphate) + phosphate. The catalysed reaction is 1,2-dihexadecanoyl-sn-glycero-3-phospho-(1D-myo-inositol-3,4,5-trisphosphate) + H2O = 1,2-dihexadecanoyl-sn-glycero-3-phospho-(1D-myo-inositol-3,4-bisphosphate) + phosphate. With respect to regulation, activated upon translocation to the sites of synthesis of PtdIns(3,4,5)P3 in the membrane. Enzymatic activity is enhanced in the presence of phosphatidylserine. In terms of biological role, phosphatidylinositol (PtdIns) phosphatase that specifically hydrolyzes the 5-phosphate of phosphatidylinositol-3,4,5-trisphosphate (PtdIns(3,4,5)P3) to produce PtdIns(3,4)P2, thereby negatively regulating the PI3K (phosphoinositide 3-kinase) pathways. Required for correct mitotic spindle orientation and therefore progression of mitosis. Plays a central role in regulation of PI3K-dependent insulin signaling, although the precise molecular mechanisms and signaling pathways remain unclear. While overexpression reduces both insulin-stimulated MAP kinase and Akt activation, its absence does not affect insulin signaling or GLUT4 trafficking. Confers resistance to dietary obesity. May act by regulating AKT2, but not AKT1, phosphorylation at the plasma membrane. Part of a signaling pathway that regulates actin cytoskeleton remodeling. Required for the maintenance and dynamic remodeling of actin structures as well as in endocytosis, having a major impact on ligand-induced EGFR internalization and degradation. Participates in regulation of cortical and submembraneous actin by hydrolyzing PtdIns(3,4,5)P3 thereby regulating membrane ruffling. Regulates cell adhesion and cell spreading. Required for HGF-mediated lamellipodium formation, cell scattering and spreading. Acts as a negative regulator of EPHA2 receptor endocytosis by inhibiting via PI3K-dependent Rac1 activation. Acts as a regulator of neuritogenesis by regulating PtdIns(3,4,5)P3 level and is required to form an initial protrusive pattern, and later, maintain proper neurite outgrowth. Acts as a negative regulator of the FC-gamma-RIIA receptor (FCGR2A). Mediates signaling from the FC-gamma-RIIB receptor (FCGR2B), playing a central role in terminating signal transduction from activating immune/hematopoietic cell receptor systems. Involved in EGF signaling pathway. Upon stimulation by EGF, it is recruited by EGFR and dephosphorylates PtdIns(3,4,5)P3. Plays a negative role in regulating the PI3K-PKB pathway, possibly by inhibiting PKB activity. Down-regulates Fc-gamma-R-mediated phagocytosis in macrophages independently of INPP5D/SHIP1. In macrophages, down-regulates NF-kappa-B-dependent gene transcription by regulating macrophage colony-stimulating factor (M-CSF)-induced signaling. Plays a role in the localization of AURKA and NEDD9/HEF1 to the basolateral membrane at interphase in polarized cysts, thereby mediates cell cycle homeostasis, cell polarization and cilia assembly. Additionally promotion of cilia growth is also facilitated by hydrolysis of (PtdIns(3,4,5)P3) to PtdIns(3,4)P2. Promotes formation of apical membrane-initiation sites during the initial stages of lumen formation via Rho family-induced actin filament organization and CTNNB1 localization to cell-cell contacts. May also hydrolyze PtdIns(1,3,4,5)P4, and could thus affect the levels of the higher inositol polyphosphates like InsP6. Involved in endochondral ossification. In Sus scrofa (Pig), this protein is Phosphatidylinositol 3,4,5-trisphosphate 5-phosphatase 2.